A 405-amino-acid chain; its full sequence is MCSIGEDDFGDEGATHAMVAESLPTGIVISPGDCNKCGVVSSELYKLNFRVAECRDCFLNHARHKFRASLGAAKVLPRNAEVLLAVDGSAESLVLLDMLHFAQTQNTFRRLHCNARVVYIDDQSVHGGESMNLQALQALGTRYEPLEFYVVELGASACSLQRLGQYSTSLKEPNGLNTKLEKLRSLTARQDYHQQQRKNLLASVAQKLSCSHVFEPSVSGDLAAQLLTSITLGRGGSAALDVALLDDRLAAGVKLLRPLRDLNEQEVRFYVHACQLKPLRESGSSYGQERGQTASLQNLTAAFVGNLQQNYPATVSTVFRTGDKIAANAHMEQASCAQCQSPLDAKLSDTLLANEYSRAVSEAGVGLSKDGDASESLAKQRLEFKDGLCHACRCIQLELGYDTLS.

The protein belongs to the CTU2/NCS2 family.

It localises to the cytoplasm. It functions in the pathway tRNA modification; 5-methoxycarbonylmethyl-2-thiouridine-tRNA biosynthesis. Functionally, plays a central role in 2-thiolation of mcm(5)S(2)U at tRNA wobble positions of tRNA(Lys), tRNA(Glu) and tRNA(Gln). May act by forming a heterodimer with NCS6/CTU1 that ligates sulfur from thiocarboxylated URM1 onto the uridine of tRNAs at wobble position. This chain is Cytoplasmic tRNA 2-thiolation protein 2, found in Drosophila pseudoobscura pseudoobscura (Fruit fly).